The primary structure comprises 574 residues: R-linalool synthase, chloroplastic (574 aa).

A chloroplast-targeting transit peptide spans 1–40 (MSCARITVTLPYRSAKTSIQRGITHCPALLRPRFSACTPL). Residues 52-61 (INGDNSPLKN) show a composition bias toward polar residues. The segment at 52 to 71 (INGDNSPLKNTHQHVEERSS) is disordered. (2E)-geranyl diphosphate is bound by residues Arg-287, Asp-324, Asp-328, Arg-467, and Asp-470. The Mg(2+) site is built by Asp-324 and Asp-328. A DDXXD motif motif is present at residues 324-328 (DDIFD). Positions 470, 474, and 478 each coordinate Mg(2+).

The protein belongs to the terpene synthase family. Tpsb subfamily. Requires Mg(2+) as cofactor. The cofactor is Mn(2+).

The protein resides in the plastid. Its subcellular location is the chloroplast. The catalysed reaction is (2E)-geranyl diphosphate + H2O = (R)-linalool + diphosphate. Its pathway is secondary metabolite biosynthesis; terpenoid biosynthesis. Functionally, monoterpene synthase that catalyzes the formation of (3R)-linalool from geranyl diphosphate. This is R-linalool synthase, chloroplastic (LIS) from Ocimum basilicum (Sweet basil).